The chain runs to 1034 residues: MSARKRKFNSLKPLDTLNSSRASSPRSSASLPPKRYNTFRKDPKIVDHLNNASTKDFLPVLSMNSESKRQIELSDNDVDNNDEGEGVNSGCSDQDFEPLQSSPLKRHSSLKSTSNGLLFQMSNNLGNGSPEPAVASTSPNGSIISTKLNLNGQFSCVDSKTLRIYRHKAPCIMTFVSDHNHPKFSLYFQQSVIYNSQVNLLDDVELIILDKKNSFMAIILKDLKKVKMILDVNNSSININTNILIWSTASSASNKKIKSIKRFLLMSYSSSIKVEILDHKEQILERLKHLIHPISSSSPSLNMERAINSTKNAFDSLRLKKTKLSTNDDESPQIHTHFLSNKPHGLQSLTKRTRIASLGKKEHSISVPKSNISPSDFYNTNGTETLQSHAVSQLRRSNRFKDVSDPANSNSNSEFDDATTEFETPELFKPSLCYKFNDGSSYTITNQDFKCLFNKDWVNDSILDFFTKFYIESSIEKSIIKREQVHLMSSFFYTKLISNPADYYSNVKKWVNNTDLFSKKYVVIPINISYHWFSCIITNLDAILDFHQNKDKNDAINSDEISINNPLVNILTFDSLRQTHSREIDPIKEFLISYALDKYSIQLDKTQIKMKTCPVPQQPNMSDCGVHVILNIRKFFENPVETIDVWKNSKIKSKHFTAKMINKYFDKNERNSARKNLRHTLKLLQLNYISYLKKENLYEEVMQMEEKKSTNINNNENYDDDDEEIQIIENIDQSSKDNNAQLTSEPPCSRSSSISTTEREPTELHNSVVRQPTGEIITDNEDPVRAASPETASVSPPIRHNILKSSSPFISESANETEQEEFTSPYFGRPSLKTRAKQFEGVSSPIKNDQALSSTHDIMMPSPKPKRIYPSKKIPQLSSHVQSLSTDSMERQSSPNNTNIVISDTEQDSRLGVNSESKNTSGIVNRDDSDVNLIGSSLPNVAEKNHDNTQESNGNNDSLGKILQNVDKELNEKLVDIDDVAFSSPTRGIPRTSATSKGSNAQLLSNYGDENNQSQDSVWDEGRDNPILLEDEDP.

6 disordered regions span residues 1 to 42, 71 to 110, 388 to 419, 731 to 800, 841 to 960, and 983 to 1034; these read MSAR…FRKD, IELSDNDVDNNDEGEGVNSGCSDQDFEPLQSSPLKRHSSL, SHAVSQLRRSNRFKDVSDPANSNSNSEFDDAT, IDQS…PIRH, GVSS…DSLG, and SSPT…DEDP. A compositionally biased stretch (low complexity) spans 19-33; sequence SSRASSPRSSASLPP. Residues 74–85 are compositionally biased toward acidic residues; sequence SDNDVDNNDEGE. Residues 743–756 show a composition bias toward low complexity; sequence TSEPPCSRSSSIST. S788 bears the Phosphoserine mark. Composition is skewed to polar residues over residues 845-856, 876-904, and 912-923; these read PIKNDQALSSTH, QLSSHVQSLSTDSMERQSSPNNTNIVISD, and GVNSESKNTSGI. S903 carries the post-translational modification Phosphoserine. S983 and S984 each carry phosphoserine. Residues 992–1017 show a composition bias toward polar residues; sequence TSATSKGSNAQLLSNYGDENNQSQDS.

Belongs to the peptidase C48 family.

Insertion mutation in SMT4 confers temperature and benomyl sensitivity; high copy suppressor of a temperature sensitive mutation in MIF2. The chain is Ubiquitin-like-specific protease 2 (ULP2) from Saccharomyces cerevisiae (strain ATCC 204508 / S288c) (Baker's yeast).